A 207-amino-acid chain; its full sequence is Ribosomal RNA large subunit methyltransferase E (207 aa).

The S-adenosyl-L-methionine site is built by glycine 49, tryptophan 51, aspartate 69, aspartate 87, and aspartate 111. Lysine 151 serves as the catalytic Proton acceptor.

It belongs to the class I-like SAM-binding methyltransferase superfamily. RNA methyltransferase RlmE family.

It localises to the cytoplasm. The catalysed reaction is uridine(2552) in 23S rRNA + S-adenosyl-L-methionine = 2'-O-methyluridine(2552) in 23S rRNA + S-adenosyl-L-homocysteine + H(+). In terms of biological role, specifically methylates the uridine in position 2552 of 23S rRNA at the 2'-O position of the ribose in the fully assembled 50S ribosomal subunit. This chain is Ribosomal RNA large subunit methyltransferase E, found in Oleidesulfovibrio alaskensis (strain ATCC BAA-1058 / DSM 17464 / G20) (Desulfovibrio alaskensis).